The primary structure comprises 1649 residues: MAGGRGAPGRGRDEPPESYPQRQDHELQALEAIYGADFQDLRPDACGPVKEPPEINLVLYPQGLTGEEVYVKVDLRVKCPPTYPDVVPEIELKNAKGLSNESVNLLKSRLEELAKKHCGEVMIFELAYHVQSFLSEHNKPPPKSFHEEMLERRAQEEQQRLLEAKRKEEQEQREILHEIQRRKEEIKEEKKRKEMAKQERLEIASLSNQDHTSKKDPGGHRTAAILHGGSPDFVGNGKHRANSSGRSRRERQYSVCNSEDSPGSCEILYFNMGSPDQLMVHKGKCIGSDEQLGKLVYNALETATGGFVLLYEWVLQWQKKMGPFLTSQEKEKIDKCKKQIQGTETEFNSLVKLSHPNVVRYLAMNLKEQDDSIVVDILVEHISGVSLAAHLSHSGPIPVHQLRRYTAQLLSGLDYLHSNSVVHKVLSASNVLVDAEGTVKITDYSISKRLADICKEDVFEQTRVRFSDNALPYKTGKKGDVWRLGLLLLSLSQGQECGEYPVTIPSDLPADFQDFLKKCVCLDDKERWSPQQLLKHSFINPQPKMPLVEQSPEDSEGQDYVETVIPSNRLPSAAFFSETQRQFSRYFIEFEELQLLGKGAFGAVIKVQNKLDGCCYAVKRIPINPASRQFRRIKGEVTLLSRLHHENIVRYYNAWIERHERPAGPGTPPPDSGPLAKDDRAARGQPASDTDGLDSVEAAAPPPILSSSVEWSTSGERSASARFPATGPGSSDDEDDDEDEHGGVFSQSFLPASDSESDIIFDNEDENSKSQNQDEDCNEKNGCHESEPSVTTEAVHYLYIQMEYCEKSTLRDTIDQGLYRDTVRLWRLFREILDGLAYIHEKGMIHRDLKPVNIFLDSDDHVKIGDFGLATDHLAFSADSKQDDQTGDLIKSDPSGHLTGMVGTALYVSPEVQGSTKSAYNQKVDLFSLGIIFFEMSYHPMVTASERIFVLNQLRDPTSPKFPEDFDDGEHAKQKSVISWLLNHDPAKRPTATELLKSELLPPPQMEESELHEVLHHTLTNVDGKAYRTMMAQIFSQRISPAIDYTYDSDILKGNFSIRTAKMQQHVCETIIRIFKRHGAVQLCTPLLLPRNRQIYEHNEAALFMDHSGMLVMLPFDLRIPFARYVARNNILNLKRYCIERVFRPRKLDRFHPKELLECAFDIVTSTTNSFLPTAEIIYTIYEIIQEFPALQERNYSIYLNHTMLLKAILLHCGIPEDKLSQVYIILYDAVTEKLTRREVEAKFCNLSLSSNSLCRLYKFIEQKGDLQDLMPTINSLIKQKTGIAQLVKYGLKDLEEVVGLLKKLGIKLQVLINLGLVYKVQQHNGIIFQFVAFIKRRQRAVPEILAAGGRYDLLIPQFRGPQALGPVPTAIGVSIAIDKISAAVLNMEESVTISSCDLLVVSVGQMSMSRAINLTQKLWTAGITAEIMYDWSQSQEELQEYCRHHEITYVALVSDKEGSHVKVKSFEKERQTEKRVLETELVDHVLQKLRTKVTDERNGREASDNLAVQNLKGSFSNASGLFEIHGATVVPIVSVLAPEKLSASTRRRYETQVQTRLQTSLANLHQKSSEIEILAVDLPKETILQFLSLEWDADEQAFNTTVKQLLSRLPKQRYLKLVCDEIYNIKVEKKVSVLFLYSYRDDYYRILF.

3 disordered regions span residues 1–25, 138–158, and 227–256; these read MAGG…RQDH, NKPP…QEEQ, and HGGS…YSVC. The RWD domain maps to 25-137; the sequence is HELQALEAIY…YHVQSFLSEH (113 aa). A coiled-coil region spans residues 146-205; sequence HEEMLERRAQEEQQRLLEAKRKEEQEQREILHEIQRRKEEIKEEKKRKEMAKQERLEIAS. A Phosphoserine modification is found at S230. The span at 237 to 249 shows a compositional bias: basic residues; the sequence is GKHRANSSGRSRR. Protein kinase domains follow at residues 296 to 539 and 590 to 1001; these read VYNA…HSFI and FEEL…SELL. ATP-binding positions include 596-604 and K619; that span reads LGKGAFGAV. 2 disordered regions span residues 660–750 and 766–788; these read ERPA…QSFL and ENSK…ESEP. Phosphothreonine is present on T667. Polar residues predominate over residues 705-717; that stretch reads LSSSVEWSTSGER. A compositionally biased stretch (acidic residues) spans 731 to 740; that stretch reads SDDEDDDEDE. Positions 778–787 are enriched in basic and acidic residues; the sequence is NEKNGCHESE. The active-site Proton acceptor is D848. T871 carries the post-translational modification Phosphothreonine. A phosphothreonine; by autocatalysis mark is found at T899 and T904. Positions 1022–1493 are histidyl-tRNA synthetase-like; the sequence is VDGKAYRTMM…DHVLQKLRTK (472 aa). Position 1259 is an N6-acetyllysine (K1259).

The protein belongs to the protein kinase superfamily. Ser/Thr protein kinase family. GCN2 subfamily. Homodimer; homodimerization is important for kinase activation by uncharged tRNAs. Interacts with GCN1; this interaction stimulates EIF2AK4/GCN2 kinase activity and is impaired by IMPACT upon a variety of stress conditions, such as amino acid depletion, UV-C irradiation, proteasome inhibitor treatment and glucose deprivation. Interacts with DNAJC3; this interaction inhibits EIF2AK4/GCN2 kinase activity during endoplasmic reticulum (ER), hypothermic and amino acid-starving stress conditions. Interacts with MAP3K20; activates EIF2AK4/GCN2 kinase activity in response to moderate ribotoxic stress. As to quaternary structure, (Microbial infection) Interacts with hepatitis E virus (HEV) ORF1 protease; this interaction inhibits dimerization of EIF2AK4 and prevents EIF2AK4-mediated phosphorylation of EIF2A. Autophosphorylated; autophosphorylation on Thr-899 is increased upon amino acid starvation and in UV irradiation cells and inhibited in presence of IMPACT. As to expression, widely expressed. Expressed in lung, smooth muscle cells and macrophages.

The protein resides in the cytoplasm. It carries out the reaction L-seryl-[protein] + ATP = O-phospho-L-seryl-[protein] + ADP + H(+). It catalyses the reaction L-threonyl-[protein] + ATP = O-phospho-L-threonyl-[protein] + ADP + H(+). Functionally, metabolic-stress sensing protein kinase that phosphorylates the alpha subunit of eukaryotic translation initiation factor 2 (EIF2S1/eIF-2-alpha) in response to low amino acid availability. Plays a role as an activator of the integrated stress response (ISR) required for adaptation to amino acid starvation. EIF2S1/eIF-2-alpha phosphorylation in response to stress converts EIF2S1/eIF-2-alpha into a global protein synthesis inhibitor, leading to a global attenuation of cap-dependent translation, and thus to a reduced overall utilization of amino acids, while concomitantly initiating the preferential translation of ISR-specific mRNAs, such as the transcriptional activator ATF4, and hence allowing ATF4-mediated reprogramming of amino acid biosynthetic gene expression to alleviate nutrient depletion. Binds uncharged tRNAs. Required for the translational induction of protein kinase PRKCH following amino acid starvation. Involved in cell cycle arrest by promoting cyclin D1 mRNA translation repression after the unfolded protein response pathway (UPR) activation or cell cycle inhibitor CDKN1A/p21 mRNA translation activation in response to amino acid deprivation. Plays a role in the consolidation of synaptic plasticity, learning as well as formation of long-term memory. Plays a role in neurite outgrowth inhibition. Plays a proapoptotic role in response to glucose deprivation. Promotes global cellular protein synthesis repression in response to UV irradiation independently of the stress-activated protein kinase/c-Jun N-terminal kinase (SAPK/JNK) and p38 MAPK signaling pathways. Plays a role in the antiviral response against alphavirus infection; impairs early viral mRNA translation of the incoming genomic virus RNA, thus preventing alphavirus replication. Its function is as follows. (Microbial infection) Plays a role in modulating the adaptive immune response to yellow fever virus infection; promotes dendritic cells to initiate autophagy and antigene presentation to both CD4(+) and CD8(+) T-cells under amino acid starvation. The chain is eIF-2-alpha kinase GCN2 from Homo sapiens (Human).